The following is a 122-amino-acid chain: Large ribosomal subunit protein bL12 (122 aa).

The protein belongs to the bacterial ribosomal protein bL12 family. In terms of assembly, homodimer. Part of the ribosomal stalk of the 50S ribosomal subunit. Forms a multimeric L10(L12)X complex, where L10 forms an elongated spine to which 2 to 4 L12 dimers bind in a sequential fashion. Binds GTP-bound translation factors.

Forms part of the ribosomal stalk which helps the ribosome interact with GTP-bound translation factors. Is thus essential for accurate translation. This chain is Large ribosomal subunit protein bL12, found in Cronobacter sakazakii (strain ATCC BAA-894) (Enterobacter sakazakii).